A 104-amino-acid chain; its full sequence is Glutaredoxin 1 (104 aa).

A Glutaredoxin domain is found at 1–96 (MNKSILHTII…KLLETQPKNK (96 aa)). Cys17 and Cys20 form a disulfide bridge.

Belongs to the glutaredoxin family. As to quaternary structure, monomer.

The protein localises to the cytoplasm. Its function is as follows. Has a glutathione-disulfide oxidoreductase activity in the presence of NADPH and glutathione reductase. Reduces low molecular weight disulfides and proteins. In Rickettsia typhi (strain ATCC VR-144 / Wilmington), this protein is Glutaredoxin 1 (grxC1).